Here is a 155-residue protein sequence, read N- to C-terminus: Small ribosomal subunit protein uS17 (155 aa).

Ala2 carries the N-acetylalanine modification.

Belongs to the universal ribosomal protein uS17 family.

The sequence is that of Small ribosomal subunit protein uS17 from Drosophila pseudoobscura pseudoobscura (Fruit fly).